A 505-amino-acid polypeptide reads, in one-letter code: MLQINPNFIKHIEQELPSHLSMDEFILACNRPLRQSIRVNTLRISSEDFIALMTPRGWSFSPVPWCSDGFWITLTHDEQLGNCLEHIQGLFYIQEASSMLPPTALFTNDDADERAPLRVLDMASAPGSKTTQMAALMNNNGLLIANEYSASRVKVLHANVLRMGVSNCALTHFDGRVFGEYQYEAFDAVLLDAPCGGEGTVRKDQNALKEWQLDDVIAIADTQKDLIEAAFLALKPGGALVYSTCTLSQLENQAICQHLLSRYPEAVAFESLATLFDGAAKACTEEGFLHVWPQIYDSEGFFVAKMRKTASVPRIKSQPKAQKNFPFSPAPEKQIAALQDYIQQSFALSLPPGAQVYLRDDEFWLFPAPFSDFIGTMRFQRIGIKLADVLKKGFKIKHEAVIALGAKLGTNANNNSNTNPNNNANTNPNNNSNTNPRCIPLNQAQAEQFLMGRDIDTASFDGKLDLTPKGEMMVSYHGAAIGVVKHLGHRLKNSLPRELVRDNLG.

Residues 123–129, glutamate 147, aspartate 174, and aspartate 192 contribute to the S-adenosyl-L-methionine site; that span reads ASAPGSK. Residue cysteine 245 is the Nucleophile of the active site. A disordered region spans residues 409–437; that stretch reads GTNANNNSNTNPNNNANTNPNNNSNTNPR. Residues 410–435 are compositionally biased toward low complexity; that stretch reads TNANNNSNTNPNNNANTNPNNNSNTN.

The protein belongs to the class I-like SAM-binding methyltransferase superfamily. RsmB/NOP family.

It is found in the cytoplasm. It carries out the reaction cytidine(1407) in 16S rRNA + S-adenosyl-L-methionine = 5-methylcytidine(1407) in 16S rRNA + S-adenosyl-L-homocysteine + H(+). Specifically methylates the cytosine at position 1407 (m5C1407) of 16S rRNA. The polypeptide is Ribosomal RNA small subunit methyltransferase F (Shewanella denitrificans (strain OS217 / ATCC BAA-1090 / DSM 15013)).